The chain runs to 479 residues: MSPQTETKASVGFKAGVKEYKLTYYTPEYETKDTDILAAFRVTPQPGVPPEEAGAAVAAESSTGTWTTVWTDGLTSLDRYKGRCYHIEPVPGEETQFIAYVAYPLDLFEEGSVTNMFTSIVGNVFGFKALAALRLEDLRIPPAYTKTFQGPPHGIQVERDKLNKYGRPLLGCTIKPKLGLSAKNYGRAVYECLRGGLDFTKDDENVNSQPFMRWRDRFLFCAEAIYKSQAETGEIKGHYLNATAGTCEEMIKRAVFARELGVPIVMHDYLTGGFTANTSLSHYCRDNGLLLHIHRAMHAVIDRQKNHGMHFRVLAKALRLSGGDHIHAGTVVGKLEGDRESTLGFVDLLRDDYVEKDRSRGIFFTQDWVSLPGVLPVASGGIHVWHMPALTEIFGDDSVLQFGGGTLGHPWGNAPGAVANRVALEACVQARNEGRDLAVEGNEIIREACKWSPELAAACEVWKEITFNFPTIDKLDGQE.

Residues 1–2 (MS) constitute a propeptide that is removed on maturation. Position 3 is an N-acetylproline (Pro3). Residues Thr65, Asn123, 173–177 (TIKPK), and 201–204 (KDDE) contribute to the substrate site. Lys175 (proton acceptor) is an active-site residue. Positions 201, 203, and 204 each coordinate Mg(2+). Lys201 is modified (N6-carboxylysine). At Ser208 the chain carries Phosphoserine. His294 serves as the catalytic Proton acceptor. Substrate contacts are provided by residues 294–295 (HR) and His327. The residue at position 330 (Thr330) is a Phosphothreonine. Substrate-binding positions include Lys334 and 379–381 (SGG).

It belongs to the RuBisCO large chain family. Type I subfamily. In terms of assembly, heterohexadecamer of 8 large chains and 8 small chains; disulfide-linked. The disulfide link is formed within the large subunit homodimers. Interacts with RBCX1 and RBCX1. An intermediate complex made of eight RbcL subunits interacts with the chaperone BSD2. Mg(2+) serves as cofactor. Post-translationally, the disulfide bond which can form in the large chain dimeric partners within the hexadecamer appears to be associated with oxidative stress and protein turnover.

It localises to the plastid. The protein resides in the chloroplast. The enzyme catalyses 2 (2R)-3-phosphoglycerate + 2 H(+) = D-ribulose 1,5-bisphosphate + CO2 + H2O. It carries out the reaction D-ribulose 1,5-bisphosphate + O2 = 2-phosphoglycolate + (2R)-3-phosphoglycerate + 2 H(+). Its function is as follows. RuBisCO catalyzes two reactions: the carboxylation of D-ribulose 1,5-bisphosphate, the primary event in carbon dioxide fixation, as well as the oxidative fragmentation of the pentose substrate in the photorespiration process. Both reactions occur simultaneously and in competition at the same active site. Binds to abscisic acid (ABA). The chain is Ribulose bisphosphate carboxylase large chain from Arabidopsis thaliana (Mouse-ear cress).